A 217-amino-acid polypeptide reads, in one-letter code: Ribonuclease HII (217 aa).

Positions 16–217 constitute an RNase H type-2 domain; sequence YCIAGVDEVG…VARVLGTYHD (202 aa). A divalent metal cation contacts are provided by aspartate 22, glutamate 23, and aspartate 114.

The protein belongs to the RNase HII family. Mn(2+) is required as a cofactor. Mg(2+) serves as cofactor.

It localises to the cytoplasm. It carries out the reaction Endonucleolytic cleavage to 5'-phosphomonoester.. In terms of biological role, endonuclease that specifically degrades the RNA of RNA-DNA hybrids. The sequence is that of Ribonuclease HII from Colwellia psychrerythraea (strain 34H / ATCC BAA-681) (Vibrio psychroerythus).